We begin with the raw amino-acid sequence, 230 residues long: MTSKIIVALDYEKEAEALALVDQIDPSLCRLKVGKEMFTTLGINFVKQLHQRNFDVFLDLKYHDIPNTVARAVRSAADLGVWMVDLHASGGLRMMEEAKKILEPYGKDAPLLIAVTVLTSMEDLDLLQIGINASPMEQVLRLAHLTQRAGLDGVVCSPQEVEILRNACGEDFKLVTPGIRPIGTDFGDQRRVMTPTAAIRAGSDYLVIGRPITQADNPAEVLRSINVSIG.

Residues Asp10, Lys32, 59 to 68 (DLKYHDIPNT), Thr119, Arg180, Gln189, Gly209, and Arg210 contribute to the substrate site. Catalysis depends on Lys61, which acts as the Proton donor.

It belongs to the OMP decarboxylase family. Type 1 subfamily. Homodimer.

It carries out the reaction orotidine 5'-phosphate + H(+) = UMP + CO2. It functions in the pathway pyrimidine metabolism; UMP biosynthesis via de novo pathway; UMP from orotate: step 2/2. In terms of biological role, catalyzes the decarboxylation of orotidine 5'-monophosphate (OMP) to uridine 5'-monophosphate (UMP). In Haemophilus influenzae (strain PittEE), this protein is Orotidine 5'-phosphate decarboxylase.